Reading from the N-terminus, the 306-residue chain is UDP-N-acetylenolpyruvoylglucosamine reductase (306 aa).

Residues 34–199 (KSGGAAEWLF…VAATFRGHAE (166 aa)) form the FAD-binding PCMH-type domain. Arg179 is a catalytic residue. The disordered stretch occupies residues 215-234 (REASQPLRSRTGGSTFKNPQ). A compositionally biased stretch (polar residues) spans 220–232 (PLRSRTGGSTFKN). Ser228 acts as the Proton donor in catalysis. Glu298 is an active-site residue.

Belongs to the MurB family. It depends on FAD as a cofactor.

The protein resides in the cytoplasm. The enzyme catalyses UDP-N-acetyl-alpha-D-muramate + NADP(+) = UDP-N-acetyl-3-O-(1-carboxyvinyl)-alpha-D-glucosamine + NADPH + H(+). The protein operates within cell wall biogenesis; peptidoglycan biosynthesis. In terms of biological role, cell wall formation. The polypeptide is UDP-N-acetylenolpyruvoylglucosamine reductase (Rhizorhabdus wittichii (strain DSM 6014 / CCUG 31198 / JCM 15750 / NBRC 105917 / EY 4224 / RW1) (Sphingomonas wittichii)).